The primary structure comprises 500 residues: NAD(P)H-quinone oxidoreductase chain 4, chloroplastic (500 aa).

The next 14 membrane-spanning stretches (helical) occupy residues 4–24 (FPWLTIIVVLPIFAGSSIFFF), 35–55 (YTICICLLELLLTTYAFCYHF), 87–107 (IGPVLLTGFITTLATLAAWPV), 113–130 (LFHFLMLAMYSGQIGSFS), 134–154 (LLLFFIMWELELIPVYLLLSM), 167–187 (FILYTAGGSIFLLIGVSGMGL), 208–228 (ALEILLYFGFFIAYAVKLPII), 242–262 (HYSTCMLLAGILLKMGAYGLV), 272–292 (AHSIFSPWLMIVGTIQIIYAA), 305–325 (IAYSSVSHMGFTILGISSITD), 330–350 (GAILQMISHGFIGAALFFLAG), 386–406 (LALPGMSGFVAELVVFFGIIT), 416–436 (ILITFVTAIGMILTPIYSLSM), and 463–483 (FVSICIFLPVIGIGIYPDFVF).

This sequence belongs to the complex I subunit 4 family.

The protein resides in the plastid. It is found in the chloroplast thylakoid membrane. It catalyses the reaction a plastoquinone + NADH + (n+1) H(+)(in) = a plastoquinol + NAD(+) + n H(+)(out). The catalysed reaction is a plastoquinone + NADPH + (n+1) H(+)(in) = a plastoquinol + NADP(+) + n H(+)(out). This chain is NAD(P)H-quinone oxidoreductase chain 4, chloroplastic, found in Nandina domestica (Heavenly bamboo).